The sequence spans 349 residues: Hydroxymethylglutaryl-CoA synthase (349 aa).

(3S)-3-hydroxy-3-methylglutaryl-CoA is bound by residues aspartate 29 and alanine 30. Glutamate 81 serves as the catalytic Proton donor/acceptor. The (3S)-3-hydroxy-3-methylglutaryl-CoA site is built by cysteine 113 and threonine 154. Catalysis depends on cysteine 113, which acts as the Acyl-thioester intermediate. A CoA-binding site is contributed by arginine 202. The (3S)-3-hydroxy-3-methylglutaryl-CoA site is built by threonine 204 and histidine 237. The Proton donor/acceptor role is filled by histidine 237. CoA is bound at residue lysine 242. (3S)-3-hydroxy-3-methylglutaryl-CoA is bound by residues arginine 246, asparagine 269, and serine 299.

Belongs to the thiolase-like superfamily. Archaeal HMG-CoA synthase family. Interacts with acetoacetyl-CoA thiolase that catalyzes the precedent step in the pathway and with a DUF35 protein. The acetoacetyl-CoA thiolase/HMG-CoA synthase complex channels the intermediate via a fused CoA-binding site, which allows for efficient coupling of the endergonic thiolase reaction with the exergonic HMGCS reaction.

It carries out the reaction acetoacetyl-CoA + acetyl-CoA + H2O = (3S)-3-hydroxy-3-methylglutaryl-CoA + CoA + H(+). It functions in the pathway metabolic intermediate biosynthesis; (R)-mevalonate biosynthesis; (R)-mevalonate from acetyl-CoA: step 2/3. Functionally, catalyzes the condensation of acetyl-CoA with acetoacetyl-CoA to form 3-hydroxy-3-methylglutaryl-CoA (HMG-CoA). Functions in the mevalonate (MVA) pathway leading to isopentenyl diphosphate (IPP), a key precursor for the biosynthesis of isoprenoid compounds that are building blocks of archaeal membrane lipids. The polypeptide is Hydroxymethylglutaryl-CoA synthase (Methanococcoides burtonii (strain DSM 6242 / NBRC 107633 / OCM 468 / ACE-M)).